Consider the following 625-residue polypeptide: tRNA uridine 5-carboxymethylaminomethyl modification enzyme MnmG (625 aa).

14–19 lines the FAD pocket; sequence GAGHAG. 273–287 serves as a coordination point for NAD(+); the sequence is GPRYCPSIEDKIVRF.

This sequence belongs to the MnmG family. In terms of assembly, homodimer. Heterotetramer of two MnmE and two MnmG subunits. It depends on FAD as a cofactor.

Its subcellular location is the cytoplasm. Its function is as follows. NAD-binding protein involved in the addition of a carboxymethylaminomethyl (cmnm) group at the wobble position (U34) of certain tRNAs, forming tRNA-cmnm(5)s(2)U34. The protein is tRNA uridine 5-carboxymethylaminomethyl modification enzyme MnmG of Clostridium botulinum (strain Loch Maree / Type A3).